Consider the following 601-residue polypeptide: Elongation factor 4 (601 aa).

One can recognise a tr-type G domain in the interval 7–189 (DNIRNFSIVA…AIVKRLPPPK (183 aa)). GTP-binding positions include 19–24 (DHGKST) and 136–139 (NKVD).

Belongs to the TRAFAC class translation factor GTPase superfamily. Classic translation factor GTPase family. LepA subfamily.

It localises to the cell inner membrane. It carries out the reaction GTP + H2O = GDP + phosphate + H(+). Functionally, required for accurate and efficient protein synthesis under certain stress conditions. May act as a fidelity factor of the translation reaction, by catalyzing a one-codon backward translocation of tRNAs on improperly translocated ribosomes. Back-translocation proceeds from a post-translocation (POST) complex to a pre-translocation (PRE) complex, thus giving elongation factor G a second chance to translocate the tRNAs correctly. Binds to ribosomes in a GTP-dependent manner. This chain is Elongation factor 4, found in Methylorubrum populi (strain ATCC BAA-705 / NCIMB 13946 / BJ001) (Methylobacterium populi).